Here is a 155-residue protein sequence, read N- to C-terminus: Ribosomal RNA large subunit methyltransferase H (155 aa).

S-adenosyl-L-methionine is bound by residues Leu-72, Gly-103, and 122–127 (LSPLTL).

It belongs to the RNA methyltransferase RlmH family. As to quaternary structure, homodimer.

The protein localises to the cytoplasm. The enzyme catalyses pseudouridine(1915) in 23S rRNA + S-adenosyl-L-methionine = N(3)-methylpseudouridine(1915) in 23S rRNA + S-adenosyl-L-homocysteine + H(+). In terms of biological role, specifically methylates the pseudouridine at position 1915 (m3Psi1915) in 23S rRNA. The sequence is that of Ribosomal RNA large subunit methyltransferase H from Actinobacillus pleuropneumoniae serotype 3 (strain JL03).